A 128-amino-acid chain; its full sequence is Large ribosomal subunit protein bL12 (128 aa).

The protein belongs to the bacterial ribosomal protein bL12 family. In terms of assembly, homodimer. Part of the ribosomal stalk of the 50S ribosomal subunit. Forms a multimeric L10(L12)X complex, where L10 forms an elongated spine to which 2 to 4 L12 dimers bind in a sequential fashion. Binds GTP-bound translation factors.

Forms part of the ribosomal stalk which helps the ribosome interact with GTP-bound translation factors. Is thus essential for accurate translation. The sequence is that of Large ribosomal subunit protein bL12 from Corynebacterium jeikeium (strain K411).